The primary structure comprises 265 residues: Putative hydro-lyase Teth514_1597 (265 aa).

This sequence belongs to the D-glutamate cyclase family.

This is Putative hydro-lyase Teth514_1597 from Thermoanaerobacter sp. (strain X514).